The chain runs to 569 residues: Toxin YxiD (569 aa).

The LXG domain occupies 1 to 235; sequence MKTLDVHALH…NPQMKQADDS (235 aa). Positions 8–91 form a coiled coil; that stretch reads ALHEGIQHTI…QHAISSVESN (84 aa). The segment at 548-569 is disordered; the sequence is HQAGIHGTGSPANELFKGGKKK.

It in the N-terminal section; belongs to the LXG family. In terms of assembly, probably interacts with cognate immunity protein YxxD but not with non-cognate immunity proteins. The interaction inhibits the toxic activity of YxxD.

It is found in the secreted. Functionally, toxic component of one of 6 LXG toxin-immunity modules in this strain. They promote kin selection, mediate competition in biofilms, and drive spatial segregation of different strains, indicating that LXG toxins may help avoid warfare between strains in biofilms. Mediates intercellular competition during biofilm formation; disruption of the operon disadvantages the bacteria, but overexpression of the cognate immunity protein restores growth in competition with wild-type. Overexpression alone in situ causes growth arrest but not cell lysis, a large decrease in chromosomal DNA content and the production of anucleate cells. No effect is seen on rRNA. Co-overexpression with cognate immunity protein YxxD does not cause growth arrest. The toxic effect is not dependent on the epsA and tapA operons which are required for biofilm formation. In Bacillus subtilis (strain 168), this protein is Toxin YxiD (yxiD).